The following is a 237-amino-acid chain: 2-C-methyl-D-erythritol 4-phosphate cytidylyltransferase (237 aa).

It belongs to the IspD/TarI cytidylyltransferase family. IspD subfamily.

It carries out the reaction 2-C-methyl-D-erythritol 4-phosphate + CTP + H(+) = 4-CDP-2-C-methyl-D-erythritol + diphosphate. Its pathway is isoprenoid biosynthesis; isopentenyl diphosphate biosynthesis via DXP pathway; isopentenyl diphosphate from 1-deoxy-D-xylulose 5-phosphate: step 2/6. Functionally, catalyzes the formation of 4-diphosphocytidyl-2-C-methyl-D-erythritol from CTP and 2-C-methyl-D-erythritol 4-phosphate (MEP). The protein is 2-C-methyl-D-erythritol 4-phosphate cytidylyltransferase of Vibrio vulnificus (strain CMCP6).